The primary structure comprises 346 residues: Methylthioribose-1-phosphate isomerase (346 aa).

Substrate-binding positions include 46–48 (RGA), Arg89, and Gln196. The Proton donor role is filled by Asp237. Residue 247-248 (NK) participates in substrate binding.

Belongs to the eIF-2B alpha/beta/delta subunits family. MtnA subfamily.

It catalyses the reaction 5-(methylsulfanyl)-alpha-D-ribose 1-phosphate = 5-(methylsulfanyl)-D-ribulose 1-phosphate. Its pathway is amino-acid biosynthesis; L-methionine biosynthesis via salvage pathway; L-methionine from S-methyl-5-thio-alpha-D-ribose 1-phosphate: step 1/6. In terms of biological role, catalyzes the interconversion of methylthioribose-1-phosphate (MTR-1-P) into methylthioribulose-1-phosphate (MTRu-1-P). The sequence is that of Methylthioribose-1-phosphate isomerase from Geobacter sulfurreducens (strain ATCC 51573 / DSM 12127 / PCA).